Here is a 494-residue protein sequence, read N- to C-terminus: Protein transport protein Sec61 subunit alpha (494 aa).

Transmembrane regions (helical) follow at residues 36-56, 79-99, 122-142, 147-167, 177-197, 249-269, 294-314, 359-379, 426-446, and 450-470; these read LWTS…LYGI, LMEL…LLAG, LLGI…GMYG, LGAG…IIVI, YGIG…SIVW, LLAT…QVEL, MPII…QILY, IVSD…SCAL, AAFG…MGAI, and TGIL…LLAV.

This sequence belongs to the SecY/SEC61-alpha family. In terms of assembly, heterotrimeric complex composed of SEC61-alpha, SEC61-beta and SEC61-gamma.

Its subcellular location is the endoplasmic reticulum membrane. Functionally, appears to play a crucial role in the insertion of secretory and membrane polypeptides into the ER. It is required for assembly of membrane and secretory proteins. In Pyrenomonas salina, this protein is Protein transport protein Sec61 subunit alpha.